A 422-amino-acid polypeptide reads, in one-letter code: Serine--tRNA ligase (422 aa).

Residue Thr-226–Glu-228 participates in L-serine binding. ATP contacts are provided by residues Arg-257–Glu-259 and Val-273. Glu-280 contacts L-serine. Glu-344 to Ser-347 serves as a coordination point for ATP. Thr-379 contributes to the L-serine binding site.

This sequence belongs to the class-II aminoacyl-tRNA synthetase family. Type-1 seryl-tRNA synthetase subfamily. Homodimer. The tRNA molecule binds across the dimer.

It localises to the cytoplasm. The enzyme catalyses tRNA(Ser) + L-serine + ATP = L-seryl-tRNA(Ser) + AMP + diphosphate + H(+). The catalysed reaction is tRNA(Sec) + L-serine + ATP = L-seryl-tRNA(Sec) + AMP + diphosphate + H(+). Its pathway is aminoacyl-tRNA biosynthesis; selenocysteinyl-tRNA(Sec) biosynthesis; L-seryl-tRNA(Sec) from L-serine and tRNA(Sec): step 1/1. Catalyzes the attachment of serine to tRNA(Ser). Is also able to aminoacylate tRNA(Sec) with serine, to form the misacylated tRNA L-seryl-tRNA(Sec), which will be further converted into selenocysteinyl-tRNA(Sec). In Corynebacterium glutamicum (strain ATCC 13032 / DSM 20300 / JCM 1318 / BCRC 11384 / CCUG 27702 / LMG 3730 / NBRC 12168 / NCIMB 10025 / NRRL B-2784 / 534), this protein is Serine--tRNA ligase.